Consider the following 231-residue polypeptide: NADH-ubiquinone oxidoreductase chain 4 (231 aa).

6 helical membrane passes run 1–21, 34–54, 61–80, 84–106, 128–148, and 169–189; these read PIAG…YGII, MFLP…LTCL, SLIA…AIII, WGLT…LFCL, ILPM…ATPP, and TIIL…HMFL.

It belongs to the complex I subunit 4 family.

It localises to the mitochondrion membrane. It carries out the reaction a ubiquinone + NADH + 5 H(+)(in) = a ubiquinol + NAD(+) + 4 H(+)(out). Its function is as follows. Core subunit of the mitochondrial membrane respiratory chain NADH dehydrogenase (Complex I) that is believed to belong to the minimal assembly required for catalysis. Complex I functions in the transfer of electrons from NADH to the respiratory chain. The immediate electron acceptor for the enzyme is believed to be ubiquinone. The sequence is that of NADH-ubiquinone oxidoreductase chain 4 (MT-ND4) from Atropoides picadoi (Picado's pit viper).